The primary structure comprises 482 residues: Phenylalanine--tRNA ligase alpha subunit (482 aa).

Residues Thr-327, 366–368 (QIE), and Tyr-406 each bind L-phenylalanine. Glu-408 serves as a coordination point for Mg(2+). Phe-430 contributes to the L-phenylalanine binding site.

This sequence belongs to the class-II aminoacyl-tRNA synthetase family. Phe-tRNA synthetase alpha subunit type 2 subfamily. As to quaternary structure, tetramer of two alpha and two beta subunits. Mg(2+) serves as cofactor.

It is found in the cytoplasm. The enzyme catalyses tRNA(Phe) + L-phenylalanine + ATP = L-phenylalanyl-tRNA(Phe) + AMP + diphosphate + H(+). This chain is Phenylalanine--tRNA ligase alpha subunit, found in Thermoplasma volcanium (strain ATCC 51530 / DSM 4299 / JCM 9571 / NBRC 15438 / GSS1).